A 297-amino-acid polypeptide reads, in one-letter code: Nucleotide-binding protein BURPS668_0577 (297 aa).

8–15 (GISGSGKS) is an ATP binding site. 57–60 (DARS) lines the GTP pocket.

The protein belongs to the RapZ-like family.

In terms of biological role, displays ATPase and GTPase activities. The polypeptide is Nucleotide-binding protein BURPS668_0577 (Burkholderia pseudomallei (strain 668)).